Consider the following 343-residue polypeptide: UDP-3-O-acylglucosamine N-acyltransferase (343 aa).

Histidine 236 (proton acceptor) is an active-site residue.

Belongs to the transferase hexapeptide repeat family. LpxD subfamily. In terms of assembly, homotrimer.

It carries out the reaction a UDP-3-O-[(3R)-3-hydroxyacyl]-alpha-D-glucosamine + a (3R)-hydroxyacyl-[ACP] = a UDP-2-N,3-O-bis[(3R)-3-hydroxyacyl]-alpha-D-glucosamine + holo-[ACP] + H(+). The protein operates within bacterial outer membrane biogenesis; LPS lipid A biosynthesis. Catalyzes the N-acylation of UDP-3-O-acylglucosamine using 3-hydroxyacyl-ACP as the acyl donor. Is involved in the biosynthesis of lipid A, a phosphorylated glycolipid that anchors the lipopolysaccharide to the outer membrane of the cell. The chain is UDP-3-O-acylglucosamine N-acyltransferase from Syntrophotalea carbinolica (strain DSM 2380 / NBRC 103641 / GraBd1) (Pelobacter carbinolicus).